We begin with the raw amino-acid sequence, 300 residues long: ClpXP adapter protein SpxH (300 aa).

This sequence belongs to the SpxH family. In terms of assembly, interacts with Spx.

Its subcellular location is the cytoplasm. Adapter protein required for efficient degradation of Spx by ClpXP under non-stress conditions. Interaction with Spx stabilizes Spx and exposes the C-terminus of Spx for recognition and proteolysis by ClpXP. This chain is ClpXP adapter protein SpxH, found in Shouchella clausii (strain KSM-K16) (Alkalihalobacillus clausii).